A 362-amino-acid polypeptide reads, in one-letter code: 3-dehydroquinate synthase (362 aa).

Residues 70-75, 104-108, 128-129, lysine 141, and lysine 150 contribute to the NAD(+) site; these read DGEQYK, GVIGD, and TT. Residues glutamate 183, histidine 246, and histidine 263 each coordinate Zn(2+).

It belongs to the sugar phosphate cyclases superfamily. Dehydroquinate synthase family. It depends on NAD(+) as a cofactor. Co(2+) is required as a cofactor. Zn(2+) serves as cofactor.

The protein localises to the cytoplasm. The enzyme catalyses 7-phospho-2-dehydro-3-deoxy-D-arabino-heptonate = 3-dehydroquinate + phosphate. Its pathway is metabolic intermediate biosynthesis; chorismate biosynthesis; chorismate from D-erythrose 4-phosphate and phosphoenolpyruvate: step 2/7. Catalyzes the conversion of 3-deoxy-D-arabino-heptulosonate 7-phosphate (DAHP) to dehydroquinate (DHQ). The chain is 3-dehydroquinate synthase from Pasteurella multocida (strain Pm70).